The chain runs to 198 residues: Probable chemoreceptor glutamine deamidase CheD (198 aa).

This sequence belongs to the CheD family.

It carries out the reaction L-glutaminyl-[protein] + H2O = L-glutamyl-[protein] + NH4(+). Probably deamidates glutamine residues to glutamate on methyl-accepting chemotaxis receptors (MCPs), playing an important role in chemotaxis. The chain is Probable chemoreceptor glutamine deamidase CheD from Stenotrophomonas maltophilia (strain K279a).